Consider the following 388-residue polypeptide: Phosphopentomutase (388 aa).

Positions 11, 283, 288, 324, 325, and 336 each coordinate Mn(2+).

The protein belongs to the phosphopentomutase family. Mn(2+) is required as a cofactor.

The protein localises to the cytoplasm. It catalyses the reaction 2-deoxy-alpha-D-ribose 1-phosphate = 2-deoxy-D-ribose 5-phosphate. It carries out the reaction alpha-D-ribose 1-phosphate = D-ribose 5-phosphate. It functions in the pathway carbohydrate degradation; 2-deoxy-D-ribose 1-phosphate degradation; D-glyceraldehyde 3-phosphate and acetaldehyde from 2-deoxy-alpha-D-ribose 1-phosphate: step 1/2. Isomerase that catalyzes the conversion of deoxy-ribose 1-phosphate (dRib-1-P) and ribose 1-phosphate (Rib-1-P) to deoxy-ribose 5-phosphate (dRib-5-P) and ribose 5-phosphate (Rib-5-P), respectively. The chain is Phosphopentomutase from Anaeromyxobacter dehalogenans (strain 2CP-1 / ATCC BAA-258).